Reading from the N-terminus, the 99-residue chain is Plastocyanin (99 aa).

The region spanning 1-99 (IEVLLGSDDG…AGMVGKVTVN (99 aa)) is the Plastocyanin-like domain. Cu cation contacts are provided by histidine 37, cysteine 84, histidine 87, and methionine 92.

Belongs to the plastocyanin family. Requires Cu(2+) as cofactor.

Its subcellular location is the plastid. The protein resides in the chloroplast thylakoid membrane. Functionally, participates in electron transfer between P700 and the cytochrome b6-f complex in photosystem I. This chain is Plastocyanin (PETE), found in Solanum crispum (Chilean potato-tree).